The chain runs to 539 residues: Chaperonin GroEL (539 aa).

ATP-binding positions include 29–32 (TIGP), 86–90 (DGTTT), Gly-413, 476–478 (NAA), and Asp-492.

The protein belongs to the chaperonin (HSP60) family. In terms of assembly, forms a cylinder of 14 subunits composed of two heptameric rings stacked back-to-back. Interacts with the co-chaperonin GroES.

The protein resides in the cytoplasm. The catalysed reaction is ATP + H2O + a folded polypeptide = ADP + phosphate + an unfolded polypeptide.. In terms of biological role, together with its co-chaperonin GroES, plays an essential role in assisting protein folding. The GroEL-GroES system forms a nano-cage that allows encapsulation of the non-native substrate proteins and provides a physical environment optimized to promote and accelerate protein folding. This Staphylococcus haemolyticus (strain JCSC1435) protein is Chaperonin GroEL.